The sequence spans 733 residues: LMBR1 domain-containing protein 2 homolog A (733 aa).

5 helical membrane-spanning segments follow: residues 1–21, 33–53, 125–145, 163–183, and 191–211; these read MIVIFIFILIAVGLLSTKILH, VYISVWIGWFMCFSIVILVPI, FYFGTLLLTWLVYPLMGSFVL, AYLYLIFGVIGLVVMIWLLAV, and MVGFAMAAANTWGLCLVIILM. Residues 232-266 are a coiled coil; sequence LKHLQFKAVELLNSKKKANEELIATMKVIRRIQEK. The next 4 membrane-spanning stretches (helical) occupy residues 386–406, 423–443, 468–488, and 513–533; these read AAIVFAVLSLLIIWSEFALAF, VSNIFVQFILFFPLGYEALTC, SIIFSAAYLCRLGAPLCYNFI, and VAPFLGTYFYIYFPLLIVIVC. 3 disordered regions span residues 581–641, 649–668, and 674–696; these read NNIK…TSSA, LKKSSNNNNNNNNNNNPYEQ, and ESNDFDDDDDIESGGAGRPTYNA. A compositionally biased stretch (polar residues) spans 596–619; that stretch reads DSTSNNPKQIFKSGSTTISKQSPP. 2 stretches are compositionally biased toward low complexity: residues 620–640 and 654–664; these read NLNVSGGNINNNNTNNGNTSS and NNNNNNNNNNN. Residues 674–685 show a composition bias toward acidic residues; it reads ESNDFDDDDDIE.

Belongs to the LIMR family.

The protein resides in the membrane. In Dictyostelium discoideum (Social amoeba), this protein is LMBR1 domain-containing protein 2 homolog A.